Consider the following 1875-residue polypeptide: Neuron navigator 1 (1875 aa).

At M1 the chain carries N-acetylmethionine. The segment at M1–S63 is disordered. Phosphoserine occurs at positions 93 and 145. Disordered regions lie at residues S115–A230 and S280–S339. T162 is subject to Phosphothreonine. Residues S197 and S202 each carry the phosphoserine modification. Positions E258–R283 form a coiled coil. Residues S280 to S291 show a composition bias toward polar residues. S299, S311, S315, S365, and S394 each carry phosphoserine. Positions P304 to S318 are enriched in low complexity. Disordered regions lie at residues G391–S463 and S477–P783. 2 stretches are compositionally biased toward low complexity: residues D414 to D428 and N436 to T456. Phosphoserine is present on residues S455, S477, S479, and S493. The span at S479 to Y489 shows a compositional bias: basic and acidic residues. Positions E506 to K522 are enriched in basic and acidic residues. S531 carries the phosphoserine modification. Residue T537 is modified to Phosphothreonine. The residue at position 544 (S544) is a Phosphoserine. T547 is subject to Phosphothreonine. Basic and acidic residues predominate over residues G558–K569. The residue at position 575 (T575) is a Phosphothreonine. The span at A584–K594 shows a compositional bias: basic and acidic residues. Polar residues-rich tracts occupy residues G618–S638 and R648–V658. S651 is subject to Phosphoserine. An Omega-N-methylarginine modification is found at R690. 2 stretches are compositionally biased toward polar residues: residues V696 to L712 and G726 to Q735. The stretch at V733–K758 forms a coiled coil. Residues S752, S756, S762, S799, and S810 each carry the phosphoserine modification. Polar residues predominate over residues D753–S772. 2 disordered regions span residues L800 to S840 and M893 to A982. 2 stretches are compositionally biased toward low complexity: residues N807 to D818 and M893 to S902. Position 998 is a phosphoserine (S998). Residue T1004 is modified to Phosphothreonine. Residues S1070–A1161 adopt a coiled-coil conformation. Residue T1168 is modified to Phosphothreonine. Disordered stretches follow at residues L1172–D1202, A1242–S1306, V1359–P1381, and K1808–S1841. A Phosphoserine modification is found at S1179. Residues S1179–S1198 are compositionally biased toward low complexity. Over residues P1244 to T1259 the composition is skewed to polar residues. Positions E1260–T1281 are enriched in low complexity. The residue at position 1263 (S1263) is a Phosphoserine. Residues E1301–A1360 adopt a coiled-coil conformation. Over residues S1365–P1381 the composition is skewed to polar residues. Position 1380 is a phosphoserine (S1380).

The protein belongs to the Nav/unc-53 family. In terms of assembly, interacts with tubulin. In terms of tissue distribution, expressed in heart and brain. Present in brain (at protein level). In adult brain, found almost exclusively in areas of secondary neurogenesis from the hippocampus and the subventricular zone.

It is found in the cytoplasm. Its subcellular location is the cytoskeleton. May be involved in neuronal migration. In Mus musculus (Mouse), this protein is Neuron navigator 1 (Nav1).